A 429-amino-acid chain; its full sequence is GTPase Obg (429 aa).

Residues 1-158 enclose the Obg domain; sequence MFADSAKIFI…LNVTLELKVI (158 aa). The OBG-type G domain maps to 159–333; the sequence is ADVGLVGFPN…LLYYVSDLLK (175 aa). GTP-binding positions include 165–172, 190–194, 212–215, 282–285, and 314–316; these read GFPNVGKS, FTTLN, DIPG, NKTD, and SAV. Positions 172 and 192 each coordinate Mg(2+). The OCT domain occupies 350-429; it reads ENLVMSEPYT…MYGLEFDYYK (80 aa).

This sequence belongs to the TRAFAC class OBG-HflX-like GTPase superfamily. OBG GTPase family. As to quaternary structure, monomer. Mg(2+) serves as cofactor.

Its subcellular location is the cytoplasm. Functionally, an essential GTPase which binds GTP, GDP and possibly (p)ppGpp with moderate affinity, with high nucleotide exchange rates and a fairly low GTP hydrolysis rate. Plays a role in control of the cell cycle, stress response, ribosome biogenesis and in those bacteria that undergo differentiation, in morphogenesis control. This chain is GTPase Obg, found in Lachnoclostridium phytofermentans (strain ATCC 700394 / DSM 18823 / ISDg) (Clostridium phytofermentans).